The primary structure comprises 254 residues: Alcohol dehydrogenase 2 (254 aa).

10 to 33 is an NAD(+) binding site; that stretch reads FVAGLGGIGFDTSREIVKSGPKNL. Ser138 is a substrate binding site. The active-site Proton acceptor is Tyr151.

Belongs to the short-chain dehydrogenases/reductases (SDR) family. In terms of assembly, homodimer.

The enzyme catalyses a primary alcohol + NAD(+) = an aldehyde + NADH + H(+). It catalyses the reaction a secondary alcohol + NAD(+) = a ketone + NADH + H(+). In Drosophila wheeleri (Fruit fly), this protein is Alcohol dehydrogenase 2 (Adh2).